The primary structure comprises 390 residues: Glucose-fructose oxidoreductase domain-containing protein 1 (390 aa).

Positions 1-21 are cleaved as a signal peptide; that stretch reads MLPGVGVFGTSLTSRVIIPLL. Residues asparagine 161, asparagine 270, and asparagine 354 are each glycosylated (N-linked (GlcNAc...) asparagine).

The protein belongs to the Gfo/Idh/MocA family. Homodimer.

It localises to the secreted. Functionally, probably catalytically inactive enzyme. Does not bind NAD or NADP. The sequence is that of Glucose-fructose oxidoreductase domain-containing protein 1 (gfod1) from Xenopus tropicalis (Western clawed frog).